The primary structure comprises 257 residues: uncharacterized protein (257 aa).

Asparagine 61, asparagine 95, asparagine 102, asparagine 111, asparagine 139, asparagine 148, and asparagine 152 each carry an N-linked (GlcNAc...) asparagine; by host glycan. The chain crosses the membrane as a helical span at residues 233–253; sequence WYIIGGIFWVIVLIILVIFII.

The protein localises to the host membrane. It is found in the virion. This is an uncharacterized protein from Acanthamoeba polyphaga (Amoeba).